We begin with the raw amino-acid sequence, 1065 residues long: Inversin (1065 aa).

16 ANK repeats span residues 13-42 (SLAS…ALKD), 47-76 (FGRT…DVNK), 80-110 (SQRT…WMQK), 113-144 (EEMT…EVDT), 148-177 (NKQT…NIGI), 181-213 (EGKI…TESL), 220-250 (EGRT…NITS), 254-283 (LFRT…SGTI), 288-317 (QGAT…VKDD), 321-350 (EGRT…DIDI), 356-385 (YGGT…QVDA), 389-418 (MKHT…RVDL), 422-451 (DGHS…NPNV), 455-484 (AGRT…DPNI), 488-517 (EGRT…FPNQ), and 523-553 (ERYT…SIAA). Asn75 bears the 3-hydroxyasparagine mark. Residues 490-498 (RTALHWSCN) carry the D-box 1 motif. The 30-residue stretch at 555–584 (QDIAAFKIQAVYKGYKVRKAFRDRKNLLMK) folds into the IQ 1 domain. The segment covering 589 to 616 (RKDAAAKKREEENKRKEAEQQKGRRSPD) has biased composition (basic and acidic residues). Disordered regions lie at residues 589–833 (RKDA…TPRN) and 847–886 (HLPQ…PLSG). Residues 627–640 (PSTQDVPSRQSRAP) are compositionally biased toward polar residues. Ser661 is subject to Phosphoserine. The span at 677 to 686 (SSDLQGTNSR) shows a compositional bias: polar residues. 6 stretches are compositionally biased toward basic and acidic residues: residues 687 to 697 (RPNETAREHSK), 706 to 715 (RPNEGSDGSR), 723 to 736 (EKSR…ERCA), 752 to 762 (GPDEKGEDSRR), 770 to 786 (HDSH…EPKA), and 853 to 863 (EELRSGARRLE). The D-box 2 signature appears at 909–917 (RKELFRKKN). One can recognise an IQ 2 domain in the interval 916-945 (KNKAAAVIQRAWRSYQLRKHLSHLRHMKQL). The segment at 976–999 (TTAVSKAPKSPSKGTSGTKSTKHS) is disordered. A compositionally biased stretch (low complexity) spans 983 to 994 (PKSPSKGTSGTK).

As to quaternary structure, binds calmodulin via its IQ domains. Interacts with APC2. Interacts with alpha-, beta-, and gamma-catenin. Interacts with N-cadherin (CDH2). Interacts with microtubules. Interacts with NPHP1. Interacts with DVL1, PRICKLE (PRICKLE1 or PRICKLE2) and Strabismus (VANGL1 or VANGL2). Interacts with IQCB1; the interaction likely requires additional interactors. Component of a complex containing at least ANKS6, INVS, NEK8 and NPHP3. ANKS6 may organize complex assembly by linking INVS and NPHP3 to NEK8 and INVS may target the complex to the proximal ciliary axoneme. Post-translationally, may be ubiquitinated via its interaction with APC2. In terms of processing, hydroxylated at Asn-75, most probably by HIF1AN. Widely expressed. Strongly expressed in the primary cilia of renal tubular cells.

It is found in the cytoplasm. Its subcellular location is the cytoskeleton. It localises to the spindle. The protein resides in the membrane. The protein localises to the nucleus. It is found in the cell projection. Its subcellular location is the cilium. Functionally, required for normal renal development and establishment of left-right axis. Probably acts as a molecular switch between different Wnt signaling pathways. Inhibits the canonical Wnt pathway by targeting cytoplasmic disheveled (DVL1) for degradation by the ubiquitin-proteasome. This suggests that it is required in renal development to oppose the repression of terminal differentiation of tubular epithelial cells by Wnt signaling. Involved in the organization of apical junctions in kidney cells together with NPHP1, NPHP4 and RPGRIP1L/NPHP8. Does not seem to be strictly required for ciliogenesis. The polypeptide is Inversin (INVS) (Homo sapiens (Human)).